We begin with the raw amino-acid sequence, 308 residues long: Sulfate adenylyltransferase subunit 2 (308 aa).

Positions 286-308 (RQGRIIDHDGSASMEKKKQEGYF) are disordered.

The protein belongs to the PAPS reductase family. CysD subfamily. As to quaternary structure, heterodimer composed of CysD, the smaller subunit, and CysN.

The enzyme catalyses sulfate + ATP + H(+) = adenosine 5'-phosphosulfate + diphosphate. Its pathway is sulfur metabolism; hydrogen sulfide biosynthesis; sulfite from sulfate: step 1/3. In terms of biological role, with CysN forms the ATP sulfurylase (ATPS) that catalyzes the adenylation of sulfate producing adenosine 5'-phosphosulfate (APS) and diphosphate, the first enzymatic step in sulfur assimilation pathway. APS synthesis involves the formation of a high-energy phosphoric-sulfuric acid anhydride bond driven by GTP hydrolysis by CysN coupled to ATP hydrolysis by CysD. In Nocardia farcinica (strain IFM 10152), this protein is Sulfate adenylyltransferase subunit 2.